A 303-amino-acid chain; its full sequence is tRNA-cytidine(32) 2-sulfurtransferase (303 aa).

Positions 49 to 54 match the PP-loop motif motif; that stretch reads SGGKDS. The [4Fe-4S] cluster site is built by Cys124, Cys127, and Cys215.

Belongs to the TtcA family. Homodimer. The cofactor is Mg(2+). Requires [4Fe-4S] cluster as cofactor.

The protein resides in the cytoplasm. The enzyme catalyses cytidine(32) in tRNA + S-sulfanyl-L-cysteinyl-[cysteine desulfurase] + AH2 + ATP = 2-thiocytidine(32) in tRNA + L-cysteinyl-[cysteine desulfurase] + A + AMP + diphosphate + H(+). It functions in the pathway tRNA modification. Functionally, catalyzes the ATP-dependent 2-thiolation of cytidine in position 32 of tRNA, to form 2-thiocytidine (s(2)C32). The sulfur atoms are provided by the cysteine/cysteine desulfurase (IscS) system. In Anaeromyxobacter sp. (strain Fw109-5), this protein is tRNA-cytidine(32) 2-sulfurtransferase.